A 900-amino-acid chain; its full sequence is MALEDMDKKYRISDIARELQVSPQEVLRFVKQEGARVASTSSMVDTEMHGLILGQFSDEKKMVDETRKIRAEKKQRLNRLEEQSRKTVEKEDQLRDTLQPSPVPGRVEVPVPAPIEAPVAAPVVPDAPVAPVEVVPPAPPEAPLMAEAAVEAEPEVAPPSLEAEEDSPVEAQANDQIVSYDAPKNIGGLTVLGTLDMESESDRKRRGKKKNFKESADALKDEFDTTGSVELDDDGKPKKKPGSSPLGSDLGMGKKKGKKKKKPEVDEKVISANIRSTISGMDVGAGSGSRSKFRKQRKMEREHEQEEADAFREMQQQVVRVTEYASPHELAELMSVTAKDIIQKCFTLGKFVTINQRLDKESIELIALEFGYEAEFVSEVEATEVVAEVDNEEDMDTRPPVVTIMGHVDHGKTSLLDYMRNSNVAGGESGGITQHVAAYEVTGSNGRKITFLDTPGHEAFTAMRARGAQVTDIVILVVAADDSVMPQTIEAINHAKAAGVPIVVAINKIDKPEANPEKIKTQLSEAGVLVEEWGGENQCQEISAKKGTGIVELMEKVLTEAEVRELKGNYSKEVLASGVIVESELDKGKGVISTVLVQRGFLKVGDPFVAGNTMGKVRAIMDERGKRIQSAGPSRPVSVLGFEDLPQSGDVLTVMASDREARDLAQKRQVIRREHEFRRSTRVKLDSISRQIKEGLMKELSVIIKADTDGSIQALADGLMKIQNDEVKVQIIHQGVGQITETDVLLAAASDAIIIGFRVRPNVNAKRLAEKEDLDVRFYSVIYHVLEDVEKALEGMLSPELHEESLGSLEIRQVFKVPKVGNVGGCYVLDGKILRDAKVRLLRDGVQIYDGTLDTLRRFKDDVKEVDAGYECGVGLKNYDDIKVGDVVEAYRIVETKRKL.

The span at 80 to 95 (LEEQSRKTVEKEDQLR) shows a compositional bias: basic and acidic residues. Disordered regions lie at residues 80 to 106 (LEEQ…VPGR), 149 to 169 (AVEA…DSPV), and 221 to 268 (DEFD…VDEK). The segment covering 253 to 262 (GKKKGKKKKK) has biased composition (basic residues). The tr-type G domain maps to 397–567 (TRPPVVTIMG…LTEAEVRELK (171 aa)). Positions 406 to 413 (GHVDHGKT) are G1. Residue 406–413 (GHVDHGKT) coordinates GTP. Positions 431–435 (GITQH) are G2. A G3 region spans residues 453-456 (DTPG). GTP-binding positions include 453-457 (DTPGH) and 507-510 (NKID). The G4 stretch occupies residues 507–510 (NKID). Positions 543 to 545 (SAK) are G5.

The protein belongs to the TRAFAC class translation factor GTPase superfamily. Classic translation factor GTPase family. IF-2 subfamily.

Its subcellular location is the cytoplasm. Functionally, one of the essential components for the initiation of protein synthesis. Protects formylmethionyl-tRNA from spontaneous hydrolysis and promotes its binding to the 30S ribosomal subunits. Also involved in the hydrolysis of GTP during the formation of the 70S ribosomal complex. The sequence is that of Translation initiation factor IF-2 from Chlorobium phaeovibrioides (strain DSM 265 / 1930) (Prosthecochloris vibrioformis (strain DSM 265)).